A 506-amino-acid polypeptide reads, in one-letter code: Tyrosine-protein phosphatase non-receptor type substrate 1 (506 aa).

An N-terminal signal peptide occupies residues 1–29; sequence MEPARPAPGRLRPLLCLLLAASNAWTGTA. Positions 30-145 constitute an Ig-like V-type domain; sequence GDGELQVIQP…SGPGTHLTVS (116 aa). Over 30–371 the chain is Extracellular; the sequence is GDGELQVIQP…PGPNDSNWTS (342 aa). A disulfide bond links cysteine 55 and cysteine 121. An N-linked (GlcNAc...) asparagine glycan is attached at asparagine 92. Residues 136-159 are disordered; sequence SGPGTHLTVSAKPSPPVLSGPTVR. 2 consecutive Ig-like C1-type domains span residues 148 to 248 and 255 to 348; these read PSPP…ANLS and PTLE…HTLE. Residues asparagine 167, asparagine 179, asparagine 204, asparagine 210, asparagine 246, asparagine 270, asparagine 292, asparagine 311, asparagine 319, asparagine 344, asparagine 365, and asparagine 368 are each glycosylated (N-linked (GlcNAc...) asparagine). A disulfide bridge connects residues cysteine 170 and cysteine 228. The cysteines at positions 273 and 331 are disulfide-linked. The tract at residues 344-364 is disordered; sequence NHTLEVSAPQKDQDTGQTPGP. Residues 372-392 traverse the membrane as a helical segment; sequence IFIVVGVVCALLVALLIAALY. Residues 393–506 are Cytoplasmic-facing; sequence LLRIRQNKAK…EYASVQVQRK (114 aa). The disordered stretch occupies residues 402-468; sequence KGSTSSTRLH…QARPPPVSED (67 aa). Residues 409–418 are compositionally biased toward basic and acidic residues; it reads RLHEPEKNTR. Over residues 419–429 the composition is skewed to polar residues; that stretch reads ETTQIQDNNDI. The residue at position 431 (tyrosine 431) is a Phosphotyrosine; by Tyr-kinases. Residues 432 to 435 carry the SH2-binding motif; it reads ADLN. Residues 441 to 446 carry the SH3-binding motif; sequence KSTPKA. Residues 444–456 show a composition bias toward polar residues; that stretch reads PKANEPNNHTEYA. A phosphotyrosine; by Tyr-kinases mark is found at tyrosine 455, tyrosine 472, and tyrosine 498. 3 consecutive short sequence motifs (SH2-binding) follow at residues 455 to 458, 472 to 475, and 498 to 501; these read YASI, YADL, and YASV. The disordered stretch occupies residues 480–506; the sequence is LNRTPKQPAPKPEPSYSEYASVQVQRK. The segment covering 497–506 has biased composition (polar residues); the sequence is EYASVQVQRK.

Binds PTPN11 when tyrosine-phosphorylated, except in macrophages, where it primarily binds PTPN6. Binds GRB2 in vitro. Binds JAK2 irrespective of its phosphorylation status and forms a stable complex. Binds SCAP1 and/or SCAP2. The resulting complex recruits FYB1. Binds FGR and PTK2B. Interacts with TRIM2. In terms of processing, phosphorylated on tyrosine residues. Highly expressed in spleen macrophages. Detected in skin dendritic cells.

It localises to the membrane. Functionally, immunoglobulin-like cell surface receptor for CD47. Acts as docking protein and induces translocation of PTPN6, PTPN11 and other binding partners from the cytosol to the plasma membrane. Supports adhesion of cerebellar neurons, neurite outgrowth and glial cell attachment. May play a key role in intracellular signaling during synaptogenesis and in synaptic function. Involved in the negative regulation of receptor tyrosine kinase-coupled cellular responses induced by cell adhesion, growth factors or insulin. Mediates negative regulation of phagocytosis, mast cell activation and dendritic cell activation. CD47 binding prevents maturation of immature dendritic cells and inhibits cytokine production by mature dendritic cells. Plays a role in antiviral immunity and limits new world arenavirus infection by decreasing virus internalization. Receptor for THBS1. Interaction with THBS1 stimulates phosphorylation of SIRPA. In response to THBS1, involved in ROS signaling in non-phagocytic cells, stimulating NADPH oxidase-derived ROS production. The chain is Tyrosine-protein phosphatase non-receptor type substrate 1 (SIRPA) from Bos taurus (Bovine).